The chain runs to 391 residues: 3-ketoacyl-CoA thiolase (391 aa).

Residue Cys-95 is the Acyl-thioester intermediate of the active site. Residues His-347 and Cys-377 each act as proton acceptor in the active site.

The protein belongs to the thiolase-like superfamily. Thiolase family. In terms of assembly, heterotetramer of two alpha chains (FadB) and two beta chains (FadA).

The protein resides in the cytoplasm. It catalyses the reaction an acyl-CoA + acetyl-CoA = a 3-oxoacyl-CoA + CoA. It participates in lipid metabolism; fatty acid beta-oxidation. In terms of biological role, catalyzes the final step of fatty acid oxidation in which acetyl-CoA is released and the CoA ester of a fatty acid two carbons shorter is formed. The protein is 3-ketoacyl-CoA thiolase of Ectopseudomonas oleovorans (Pseudomonas oleovorans).